Here is a 287-residue protein sequence, read N- to C-terminus: MTGTKIDGKVISQSVKDRVKKAVEELKNQGINPCLATVLVGDNPASATYVRNKHRACEEVGITTKDHKLDASTTQAQLNEIIENLNNDNSVHGILVQLPLPEQLDEFTTTSRISPLKDVDGLTPHNAGLLAMKKAALVACTPSGVMEMFDYHGIELEGKNIVLINRSNLVGKPLYHLLLDKNATVITCHSRTKNLVELCQSADIIITAVGDRNKFTLTSDMIKEGAIVIDVAISRFQEKLVGDADYEDIIQKASFATPVPGGVGPMTVAMLLKNTITAASLSSQIGK.

NADP(+) is bound by residues 165 to 167 (NRS), S190, and I233.

The protein belongs to the tetrahydrofolate dehydrogenase/cyclohydrolase family. Homodimer.

The enzyme catalyses (6R)-5,10-methylene-5,6,7,8-tetrahydrofolate + NADP(+) = (6R)-5,10-methenyltetrahydrofolate + NADPH. It catalyses the reaction (6R)-5,10-methenyltetrahydrofolate + H2O = (6R)-10-formyltetrahydrofolate + H(+). It functions in the pathway one-carbon metabolism; tetrahydrofolate interconversion. In terms of biological role, catalyzes the oxidation of 5,10-methylenetetrahydrofolate to 5,10-methenyltetrahydrofolate and then the hydrolysis of 5,10-methenyltetrahydrofolate to 10-formyltetrahydrofolate. This Nitrosopumilus maritimus (strain SCM1) protein is Bifunctional protein FolD.